The sequence spans 49 residues: Delta-actitoxin-Axm1b (49 aa).

The segment at 1–7 (GVPCLCD) is well-structured region. 3 disulfide bridges follow: C4-C46, C6-C36, and C29-C47. Residues 8–17 (SDGPRPRGNT) form an arg-14 loop (non-well-structured region) region. The well-structured region stretch occupies residues 18-49 (LSGILWFYPSGCPSGWHNCKAHGPNIGWCCKK).

This sequence belongs to the sea anemone sodium channel inhibitory toxin family. Type I subfamily.

The protein resides in the secreted. It is found in the nematocyst. Binds specifically to voltage-gated sodium channels (Nav) (site 3), thereby delaying their inactivation. This toxin has the highest affinity of all anemone toxins for the mammalian sodium channel, whereas its paralog Anthopleurin-A retains the greatest capacity to discriminate between cardiac (Nav1.5/SCN5A) and neuronal sodium channels. When tested electrophysiologically, this toxin exhibits a high affinity for multiple sodium channels with a 50-fold preference for rat cardiac (Nav1.5/SCN5A) over neuronal channels (0.1 nM versus 5 nM). When tested by ion flux, the affinities are similar and appear to have higher affinity (9 nM versus 22 nM). The residue Lys-37 of this toxin has been shown to interact with channel Nav1.5 (residue Asp-1612 in rat and Asp-1610 in human), which is located in the DIV S3-S4 linker (corresponding to channel site 3). Selectively modifies sodium channel inactivation from the open state with little effect on channel activation or on inactivation from closed states. Does not display phospholipid-binding activities, suggesting that the domain IV S3-S4 linker is located at the extracellular surface and not buried in the phospholipid bilayer. In Anthopleura xanthogrammica (Giant green sea anemone), this protein is Delta-actitoxin-Axm1b.